The following is a 95-amino-acid chain: Complement inhibitor RaCI5 (95 aa).

The signal sequence occupies residues 1–21 (MNAVIVLCVTISAVLIHQCYS). Disulfide bonds link cysteine 35/cysteine 59, cysteine 40/cysteine 61, and cysteine 55/cysteine 76.

The protein belongs to the RaCI family. In terms of tissue distribution, expressed in salivary glands.

The protein localises to the secreted. Complement inhibitor. Prevents complement-mediated C5 activation by binding to C5. Binds C5 at a different binding site than the other tick complement inhibitors OmCI and CirpT1, and the drug eculizumab. The protein is Complement inhibitor RaCI5 of Rhipicephalus appendiculatus (Brown ear tick).